Here is a 598-residue protein sequence, read N- to C-terminus: Mitogen-activated protein kinase 19 (598 aa).

The Protein kinase domain occupies Y25–F316. ATP is bound by residues I31–V39 and K54. The active-site Proton acceptor is D151. T187 is subject to Phosphothreonine. The short motif at T187 to Y189 is the TXY element. Y189 bears the Phosphotyrosine mark. Residue T192 is modified to Phosphothreonine. The disordered stretch occupies residues G396–K486. Residues S414–A425 show a composition bias toward low complexity.

The protein belongs to the protein kinase superfamily. CMGC Ser/Thr protein kinase family. MAP kinase subfamily. Post-translationally, dually phosphorylated on Thr-187 and Tyr-189, which activates the enzyme.

The enzyme catalyses L-seryl-[protein] + ATP = O-phospho-L-seryl-[protein] + ADP + H(+). It carries out the reaction L-threonyl-[protein] + ATP = O-phospho-L-threonyl-[protein] + ADP + H(+). With respect to regulation, activated by threonine and tyrosine phosphorylation. In Arabidopsis thaliana (Mouse-ear cress), this protein is Mitogen-activated protein kinase 19 (MPK19).